A 342-amino-acid chain; its full sequence is Isopentenyl-diphosphate delta-isomerase (342 aa).

11–12 (RK) contributes to the substrate binding site. FMN-binding positions include serine 68, 69–71 (SMT), serine 99, and asparagine 127. Residue 99–101 (SMR) coordinates substrate. Substrate is bound at residue glutamine 162. Glutamate 163 serves as a coordination point for Mg(2+). FMN contacts are provided by residues lysine 194, threonine 224, 274-276 (GLK), and 295-296 (AG).

This sequence belongs to the IPP isomerase type 2 family. As to quaternary structure, homooctamer. Dimer of tetramers. It depends on FMN as a cofactor. NADPH is required as a cofactor. Mg(2+) serves as cofactor.

Its subcellular location is the cytoplasm. The enzyme catalyses isopentenyl diphosphate = dimethylallyl diphosphate. In terms of biological role, involved in the biosynthesis of isoprenoids. Catalyzes the 1,3-allylic rearrangement of the homoallylic substrate isopentenyl (IPP) to its allylic isomer, dimethylallyl diphosphate (DMAPP). The chain is Isopentenyl-diphosphate delta-isomerase from Rickettsia peacockii (strain Rustic).